The chain runs to 113 residues: UPF0482 protein YnfB (113 aa).

Positions 1–28 are cleaved as a signal peptide; it reads MNNTLSKRLCLTAMLTLAAVVYTTSAFA.

This sequence belongs to the UPF0482 family.

This is UPF0482 protein YnfB from Salmonella agona (strain SL483).